A 213-amino-acid polypeptide reads, in one-letter code: Putative manganese efflux pump MntP (213 aa).

6 helical membrane passes run 3–23 (ILSIVLTGFGLAMDAFAVSVA), 36–56 (ALKVALFFGGFQALMPLIGWG), 67–87 (AFDHWIAFILLGFIGGKMIFE), 130–150 (LAIATSIDALAVGVSFAFLGI), 152–172 (IVQTIIIIGIITFVLCFLGVI), and 187–207 (IVGGVILILIGINILLEHTGI).

It belongs to the MntP (TC 9.B.29) family.

It localises to the cell membrane. In terms of biological role, probably functions as a manganese efflux pump. This is Putative manganese efflux pump MntP from Clostridium perfringens (strain SM101 / Type A).